A 433-amino-acid chain; its full sequence is Serine--tRNA ligase (433 aa).

Position 235–237 (Thr-235–Glu-237) interacts with L-serine. Arg-266–Glu-268 serves as a coordination point for ATP. L-serine is bound at residue Glu-289. Glu-353–Ser-356 contacts ATP. Ser-388 serves as a coordination point for L-serine.

The protein belongs to the class-II aminoacyl-tRNA synthetase family. Type-1 seryl-tRNA synthetase subfamily. As to quaternary structure, homodimer. The tRNA molecule binds across the dimer.

The protein localises to the cytoplasm. It carries out the reaction tRNA(Ser) + L-serine + ATP = L-seryl-tRNA(Ser) + AMP + diphosphate + H(+). The enzyme catalyses tRNA(Sec) + L-serine + ATP = L-seryl-tRNA(Sec) + AMP + diphosphate + H(+). The protein operates within aminoacyl-tRNA biosynthesis; selenocysteinyl-tRNA(Sec) biosynthesis; L-seryl-tRNA(Sec) from L-serine and tRNA(Sec): step 1/1. Catalyzes the attachment of serine to tRNA(Ser). Is also able to aminoacylate tRNA(Sec) with serine, to form the misacylated tRNA L-seryl-tRNA(Sec), which will be further converted into selenocysteinyl-tRNA(Sec). This is Serine--tRNA ligase from Burkholderia ambifaria (strain ATCC BAA-244 / DSM 16087 / CCUG 44356 / LMG 19182 / AMMD) (Burkholderia cepacia (strain AMMD)).